A 21-amino-acid polypeptide reads, in one-letter code: Mast cell protease 3 (21 aa).

Residues 1–21 enclose the Peptidase S1 domain; that stretch reads IIGGVESRPHSRPYMATLEIT. The interval 1 to 21 is disordered; the sequence is IIGGVESRPHSRPYMATLEIT.

This sequence belongs to the peptidase S1 family. Granzyme subfamily.

Thrombin inactivating protease. Displays chymotrypsin-like substrate specificity. This chain is Mast cell protease 3 (Mcpt3), found in Mus musculus (Mouse).